The sequence spans 139 residues: S-adenosylmethionine decarboxylase proenzyme (139 aa).

The Schiff-base intermediate with substrate; via pyruvic acid role is filled by S63. At S63 the chain carries Pyruvic acid (Ser); by autocatalysis. H68 serves as the catalytic Proton acceptor; for processing activity. The Proton donor; for catalytic activity role is filled by C83.

It belongs to the prokaryotic AdoMetDC family. Type 1 subfamily. In terms of assembly, heterotetramer of two alpha and two beta chains arranged as a dimer of alpha/beta heterodimers. Pyruvate is required as a cofactor. Is synthesized initially as an inactive proenzyme. Formation of the active enzyme involves a self-maturation process in which the active site pyruvoyl group is generated from an internal serine residue via an autocatalytic post-translational modification. Two non-identical subunits are generated from the proenzyme in this reaction, and the pyruvate is formed at the N-terminus of the alpha chain, which is derived from the carboxyl end of the proenzyme. The post-translation cleavage follows an unusual pathway, termed non-hydrolytic serinolysis, in which the side chain hydroxyl group of the serine supplies its oxygen atom to form the C-terminus of the beta chain, while the remainder of the serine residue undergoes an oxidative deamination to produce ammonia and the pyruvoyl group blocking the N-terminus of the alpha chain.

It carries out the reaction S-adenosyl-L-methionine + H(+) = S-adenosyl 3-(methylsulfanyl)propylamine + CO2. It functions in the pathway amine and polyamine biosynthesis; S-adenosylmethioninamine biosynthesis; S-adenosylmethioninamine from S-adenosyl-L-methionine: step 1/1. In terms of biological role, catalyzes the decarboxylation of S-adenosylmethionine to S-adenosylmethioninamine (dcAdoMet), the propylamine donor required for the synthesis of the polyamines spermine and spermidine from the diamine putrescine. This Pyrococcus abyssi (strain GE5 / Orsay) protein is S-adenosylmethionine decarboxylase proenzyme.